Here is a 334-residue protein sequence, read N- to C-terminus: Chorismatase (334 aa).

The substrate site is built by Y143, R150, Y203, and R216. E328 acts as the Proton acceptor in catalysis.

It belongs to the FkbO/Hyg5 family. In terms of assembly, monomer.

The enzyme catalyses chorismate + H2O = (3R,4R)-3,4-dihydroxy-3,4-dihydrobenzoate + pyruvate. Its function is as follows. Involved in the biosynthesis of the macrocyclic amino acid-linked polyketides rapamycin which is a potent immunosuppressant that prevents T-cell proliferation through initial binding to the immunophilin FKBP12. Catalyzes the hydrolysis of chorismate via a 1,4-conjugate elimination of water to yield (4R,5R)-4,5-dihydroxycyclohexa-1,5-dienecarboxylic acid (DCDC). This chain is Chorismatase (rapK), found in Streptomyces rapamycinicus (strain ATCC 29253 / DSM 41530 / NRRL 5491 / AYB-994) (Streptomyces hygroscopicus (strain ATCC 29253)).